We begin with the raw amino-acid sequence, 281 residues long: Ribosomal RNA small subunit methyltransferase A (281 aa).

The S-adenosyl-L-methionine site is built by asparagine 35, leucine 37, glycine 62, glutamate 83, aspartate 107, and asparagine 125.

Belongs to the class I-like SAM-binding methyltransferase superfamily. rRNA adenine N(6)-methyltransferase family. RsmA subfamily.

It localises to the cytoplasm. It carries out the reaction adenosine(1518)/adenosine(1519) in 16S rRNA + 4 S-adenosyl-L-methionine = N(6)-dimethyladenosine(1518)/N(6)-dimethyladenosine(1519) in 16S rRNA + 4 S-adenosyl-L-homocysteine + 4 H(+). Specifically dimethylates two adjacent adenosines (A1518 and A1519) in the loop of a conserved hairpin near the 3'-end of 16S rRNA in the 30S particle. May play a critical role in biogenesis of 30S subunits. The polypeptide is Ribosomal RNA small subunit methyltransferase A (Deinococcus geothermalis (strain DSM 11300 / CIP 105573 / AG-3a)).